The sequence spans 377 residues: uncharacterized protein (377 aa).

Composition is skewed to polar residues over residues methionine 1–serine 11 and proline 31–lysine 43. Disordered regions lie at residues methionine 1–lysine 43, serine 109–asparagine 141, and serine 328–glutamine 377. Residues glutamate 334–aspartate 345 are compositionally biased toward basic and acidic residues.

Belongs to the chlamydial CPn_0499/CT_392/TC_0671 family.

This is an uncharacterized protein from Chlamydia trachomatis serovar D (strain ATCC VR-885 / DSM 19411 / UW-3/Cx).